A 786-amino-acid chain; its full sequence is Endonuclease MutS2 (786 aa).

335–342 is an ATP binding site; the sequence is GPNTGGKT. The 76-residue stretch at 711–786 folds into the Smr domain; sequence LDLRGERFEN…GLGVTVVELK (76 aa).

The protein belongs to the DNA mismatch repair MutS family. MutS2 subfamily. As to quaternary structure, homodimer. Binds to stalled ribosomes, contacting rRNA.

Its function is as follows. Endonuclease that is involved in the suppression of homologous recombination and thus may have a key role in the control of bacterial genetic diversity. Functionally, acts as a ribosome collision sensor, splitting the ribosome into its 2 subunits. Detects stalled/collided 70S ribosomes which it binds and splits by an ATP-hydrolysis driven conformational change. Acts upstream of the ribosome quality control system (RQC), a ribosome-associated complex that mediates the extraction of incompletely synthesized nascent chains from stalled ribosomes and their subsequent degradation. Probably generates substrates for RQC. This is Endonuclease MutS2 from Bacillus cereus (strain ATCC 10987 / NRS 248).